The sequence spans 392 residues: MTLLGTALRPAATRVMLLGSGELGKEVAIECQRLGVEVIAVDRYADAPAMHVAHRSHVINMLDGDALRRVVELEKPHYIVPEIEAIATDMLIQLEEEGLNVVPCARATKLTMNREGIRRLAAEELQLPTSTYRFADSESLFREAVAAIGYPCIVKPVMSSSGKGQTFIRSAEQLAQAWEYAQQGGRAGAGRVIVEGVVKFDFEITLLTVSAVDGVHFCAPVGHRQEDGDYCESWQPQQMSPLALERAQEIARKVVLALGGYGLFGVELFVCGDEVIFSEVSPRPHDTGMVTLISQDLSEFALHVRAFLGLPVGGIRQYGPAASAVILPQLTSQNVTFDNVQNAVGADLQIRLFGKPEIDGSRRLGVALATAESVVDAIERAKHAAGQVKVQG.

N(1)-(5-phospho-beta-D-ribosyl)glycinamide is bound by residues 22-23 and Glu-82; that span reads EL. ATP contacts are provided by residues Arg-114, Lys-155, 160-165, 195-198, and Glu-203; these read SSGKGQ and EGVV. The ATP-grasp domain maps to 119-308; that stretch reads RLAAEELQLP…EFALHVRAFL (190 aa). Mg(2+) contacts are provided by Glu-267 and Glu-279. Residues Asp-286, Lys-355, and 362–363 contribute to the N(1)-(5-phospho-beta-D-ribosyl)glycinamide site; that span reads RR.

It belongs to the PurK/PurT family. Homodimer.

The enzyme catalyses N(1)-(5-phospho-beta-D-ribosyl)glycinamide + formate + ATP = N(2)-formyl-N(1)-(5-phospho-beta-D-ribosyl)glycinamide + ADP + phosphate + H(+). Its pathway is purine metabolism; IMP biosynthesis via de novo pathway; N(2)-formyl-N(1)-(5-phospho-D-ribosyl)glycinamide from N(1)-(5-phospho-D-ribosyl)glycinamide (formate route): step 1/1. In terms of biological role, involved in the de novo purine biosynthesis. Catalyzes the transfer of formate to 5-phospho-ribosyl-glycinamide (GAR), producing 5-phospho-ribosyl-N-formylglycinamide (FGAR). Formate is provided by PurU via hydrolysis of 10-formyl-tetrahydrofolate. The chain is Formate-dependent phosphoribosylglycinamide formyltransferase from Escherichia coli O157:H7.